A 357-amino-acid chain; its full sequence is MPKKVFQQEDVEQKITENFEPKQEFEQDELDIEMDCSQFETTMDRQNTDIPFQHMVRPKVTMWQKLLMATICLFSCGILAQSVQWLVDSWRDNQWIAFVFAMVSLFLVLLGLGAIIKEWRRLVQLKKRLILQEKSREIRSKSAVNLTEVSSEGKELCLKIASLMGIDDKSPQLIAWQEQVHEAYTEQEILRLFSQNVLIPFDRVAKKLISKNAVESALIVAVSPLAIVDMFFIAWRNIRLINQLAKLYGIELGYVSRLRLLRMVFVNMAFAGAADVIQDLGLEWLSQDITAKLSARVAQGIGVGILTARLGIKAMEFCRPIAVAPEEKLRLSHIQTELLGTLKTTLFSANKVKEKVR.

A run of 3 helical transmembrane segments spans residues 67–87, 96–116, and 213–233; these read LMAT…QWLV, IAFV…GAII, and AVES…MFFI.

Belongs to the UPF0283 family.

It localises to the cell inner membrane. In Histophilus somni (strain 129Pt) (Haemophilus somnus), this protein is UPF0283 membrane protein HS_0596.